A 533-amino-acid chain; its full sequence is MTKFIFVTGGVVSGLGKGITSASIGMLFKARGFRTTNIKIDPYLNYDAGTMNPYQHGEVFVLDDGGEVDLDLGNYERFLDTSLSFDHNITTGKVYSAVIEKERKGEYLGATVQVIPHITNEIKERIRRIARDYDVVVVEIGGTVGDIESMPFLEAARQMQIEEGRENVAFVHVTYVPRLRVVGEQKTKPTQHSVKELRSLGIQPDAIVARSEDPLEDSARRKISLFTNVPEEAVISAYDVEDTYEVPLMLEKEGLPAYLARRLGLPEREPDLEAWREMVEKYKSLTDTVEIAIVGKYVKLADSYLSIKEALKHSSVANDVKVKIRWIEAEDVERQGVKLLEGVDGIIVPGGFGARGTEGKMMAIRYARENNIPFLGICFGFQLTVVEFARNVLGLEGAHSTEIDPQTPYPVVDLMPEQRDLDRLGGTMRLGAYPVHIKPNTLARRLYGREIVYERHRHRWEVNPDYVEKFEEAGLVFSGIAGDDERRMEILELPGHSYFIATQFHPEFKSRPMRPAPVFRGLVEAAKKKKYGS.

Residues 1-265 (MTKFIFVTGG…PAYLARRLGL (265 aa)) are amidoligase domain. Residue S13 participates in CTP binding. S13 is a binding site for UTP. 14 to 19 (GLGKGI) contacts ATP. Y54 is a binding site for L-glutamine. D71 is a binding site for ATP. Residues D71 and E139 each coordinate Mg(2+). CTP contacts are provided by residues 146 to 148 (DIE), 186 to 191 (KTKPTQ), and K222. UTP contacts are provided by residues 186–191 (KTKPTQ) and K222. The 243-residue stretch at 290–532 (EIAIVGKYVK…VEAAKKKKYG (243 aa)) folds into the Glutamine amidotransferase type-1 domain. G351 is an L-glutamine binding site. C378 acts as the Nucleophile; for glutamine hydrolysis in catalysis. Residues 379-382 (FGFQ), E402, and R459 contribute to the L-glutamine site. Residues H505 and E507 contribute to the active site.

This sequence belongs to the CTP synthase family. As to quaternary structure, homotetramer.

It carries out the reaction UTP + L-glutamine + ATP + H2O = CTP + L-glutamate + ADP + phosphate + 2 H(+). It catalyses the reaction L-glutamine + H2O = L-glutamate + NH4(+). The catalysed reaction is UTP + NH4(+) + ATP = CTP + ADP + phosphate + 2 H(+). The protein operates within pyrimidine metabolism; CTP biosynthesis via de novo pathway; CTP from UDP: step 2/2. Allosterically activated by GTP, when glutamine is the substrate; GTP has no effect on the reaction when ammonia is the substrate. The allosteric effector GTP functions by stabilizing the protein conformation that binds the tetrahedral intermediate(s) formed during glutamine hydrolysis. Inhibited by the product CTP, via allosteric rather than competitive inhibition. Its function is as follows. Catalyzes the ATP-dependent amination of UTP to CTP with either L-glutamine or ammonia as the source of nitrogen. Regulates intracellular CTP levels through interactions with the four ribonucleotide triphosphates. In Thermococcus kodakarensis (strain ATCC BAA-918 / JCM 12380 / KOD1) (Pyrococcus kodakaraensis (strain KOD1)), this protein is CTP synthase.